Consider the following 206-residue polypeptide: Regulatory protein CysR (206 aa).

The region spanning 120–196 (RRAEAKLASL…DRALIVRYPE (77 aa)) is the HTH crp-type domain. A DNA-binding region (H-T-H motif) is located at residues 156–175 (HQVIAELSGSTRVTTTRLLG).

Its subcellular location is the cytoplasm. Probably regulates the expression of genes from the sulfate permease complex. The chain is Regulatory protein CysR (cysR) from Synechococcus elongatus (strain ATCC 33912 / PCC 7942 / FACHB-805) (Anacystis nidulans R2).